The chain runs to 361 residues: Chorismate synthase (361 aa).

NADP(+) is bound by residues arginine 48 and arginine 54. Residues 125-127, 240-241, glycine 286, 301-305, and arginine 327 each bind FMN; these read RSS, NA, and KPTSS.

This sequence belongs to the chorismate synthase family. In terms of assembly, homotetramer. FMNH2 is required as a cofactor.

The catalysed reaction is 5-O-(1-carboxyvinyl)-3-phosphoshikimate = chorismate + phosphate. Its pathway is metabolic intermediate biosynthesis; chorismate biosynthesis; chorismate from D-erythrose 4-phosphate and phosphoenolpyruvate: step 7/7. Catalyzes the anti-1,4-elimination of the C-3 phosphate and the C-6 proR hydrogen from 5-enolpyruvylshikimate-3-phosphate (EPSP) to yield chorismate, which is the branch point compound that serves as the starting substrate for the three terminal pathways of aromatic amino acid biosynthesis. This reaction introduces a second double bond into the aromatic ring system. This Magnetococcus marinus (strain ATCC BAA-1437 / JCM 17883 / MC-1) protein is Chorismate synthase.